A 337-amino-acid polypeptide reads, in one-letter code: DNA-directed RNA polymerase subunit alpha (337 aa).

The interval 1–233 (MVREDVVGST…DLLIPFLHAE (233 aa)) is alpha N-terminal domain (alpha-NTD). An alpha C-terminal domain (alpha-CTD) region spans residues 265–337 (KGIPLTCIFI…FAINLLNKKL (73 aa)).

The protein belongs to the RNA polymerase alpha chain family. As to quaternary structure, in plastids the minimal PEP RNA polymerase catalytic core is composed of four subunits: alpha, beta, beta', and beta''. When a (nuclear-encoded) sigma factor is associated with the core the holoenzyme is formed, which can initiate transcription.

Its subcellular location is the plastid. It localises to the chloroplast. The catalysed reaction is RNA(n) + a ribonucleoside 5'-triphosphate = RNA(n+1) + diphosphate. Its function is as follows. DNA-dependent RNA polymerase catalyzes the transcription of DNA into RNA using the four ribonucleoside triphosphates as substrates. The sequence is that of DNA-directed RNA polymerase subunit alpha from Phalaenopsis aphrodite subsp. formosana (Moth orchid).